The primary structure comprises 146 residues: MKAFAVLFVLSLIKTELRPSYGLPLLQSGLYNTNQIFQKTQTLPPFIQDSNSTLPAPSTTNLPETNKLASHLQHRLSRSLLSANTTTPKTGGELRGLPTDDPWVVAGFVTLGVVAGGLVLILCYLYTPCCAYLVILCCWFKKWGPY.

Asn-51 and Asn-84 each carry an N-linked (GlcNAc...) asparagine; by host glycan.

Its function is as follows. E3 proteins seem to be dispensable for virus growth in tissue culture cells. They are potentially important for virus growth under special conditions; E3 region may help adenoviruses to evade the immune surveillance of the host. This is Early E3 16 kDa glycoprotein from Human adenovirus B serotype 3 (HAdV-3).